Reading from the N-terminus, the 184-residue chain is ATP synthase subunit b, chloroplastic (184 aa).

The helical transmembrane segment at 27–49 threads the bilayer; the sequence is LATNPINLSVVLGVLIFFGKGVL.

The protein belongs to the ATPase B chain family. In terms of assembly, F-type ATPases have 2 components, F(1) - the catalytic core - and F(0) - the membrane proton channel. F(1) has five subunits: alpha(3), beta(3), gamma(1), delta(1), epsilon(1). F(0) has four main subunits: a(1), b(1), b'(1) and c(10-14). The alpha and beta chains form an alternating ring which encloses part of the gamma chain. F(1) is attached to F(0) by a central stalk formed by the gamma and epsilon chains, while a peripheral stalk is formed by the delta, b and b' chains.

It localises to the plastid. Its subcellular location is the chloroplast thylakoid membrane. In terms of biological role, f(1)F(0) ATP synthase produces ATP from ADP in the presence of a proton or sodium gradient. F-type ATPases consist of two structural domains, F(1) containing the extramembraneous catalytic core and F(0) containing the membrane proton channel, linked together by a central stalk and a peripheral stalk. During catalysis, ATP synthesis in the catalytic domain of F(1) is coupled via a rotary mechanism of the central stalk subunits to proton translocation. Component of the F(0) channel, it forms part of the peripheral stalk, linking F(1) to F(0). In Platanus occidentalis (Sycamore), this protein is ATP synthase subunit b, chloroplastic.